The sequence spans 326 residues: Aspartate carbamoyltransferase catalytic subunit (326 aa).

Carbamoyl phosphate contacts are provided by arginine 60 and threonine 61. Residue lysine 88 participates in L-aspartate binding. The carbamoyl phosphate site is built by arginine 110, histidine 143, and glutamine 146. 2 residues coordinate L-aspartate: arginine 183 and arginine 239. 2 residues coordinate carbamoyl phosphate: glycine 280 and proline 281.

It belongs to the aspartate/ornithine carbamoyltransferase superfamily. ATCase family. Heterododecamer (2C3:3R2) of six catalytic PyrB chains organized as two trimers (C3), and six regulatory PyrI chains organized as three dimers (R2).

It carries out the reaction carbamoyl phosphate + L-aspartate = N-carbamoyl-L-aspartate + phosphate + H(+). The protein operates within pyrimidine metabolism; UMP biosynthesis via de novo pathway; (S)-dihydroorotate from bicarbonate: step 2/3. Functionally, catalyzes the condensation of carbamoyl phosphate and aspartate to form carbamoyl aspartate and inorganic phosphate, the committed step in the de novo pyrimidine nucleotide biosynthesis pathway. This Microcystis aeruginosa (strain NIES-843 / IAM M-2473) protein is Aspartate carbamoyltransferase catalytic subunit.